The sequence spans 596 residues: MGPADSWGHHWMGILLSASLCTVWSPPAAAQLTLNANPLDATQSEDVVLPVFGTPRTPQIHGRSRELAKPSIAVSPGTAIEQKDMVTFYCTTKDVNITIHWVSNNLSIVFHERMQLSKDGKILTILIVQREDSGTYQCEARDALLSQRSDPIFLDVKYGPDPVEIKLESGVASGEVVEVMEGSSMTFLAETKSHPPCAYTWFLLDSILSHTTRTFTIHAVSREHEGLYRCLVSNSATHLSSLGTLKVRVLETLTMPQVVPSSLNLVENARSVDLTCQTVNQSVNVQWFLSGQPLLPSEHLQLSADNRTLIIHGLQRNDTGPYACEVWNWGSRARSEPLELTINYGPDQVHITRESASEMISTIEAELNSSLTLQCWAESKPGAEYRWTLEHSTGEHLGEQLIIRALTWEHDGIYNCTASNSLTGLARSTSVLVKVVGPQSSSLSSGAIAGIVIGILAVIAVASELGYFLCIRNARRPSRKTTEDPSHETSQPIPKEEHPTEPSSESLSPEYRNISQLQGRIRVELMQPPDLPEETYETKLPSASRRGNSFSPWKPPPKPLMPPLRLVSTVPKNMESIYEELVNPEPNTYIQINPSV.

The signal sequence occupies residues 1–30 (MGPADSWGHHWMGILLSASLCTVWSPPAAA). The Extracellular portion of the chain corresponds to 31–450 (QLTLNANPLD…SSLSSGAIAG (420 aa)). 4 Ig-like C2-type domains span residues 58 to 154 (PQIH…PIFL), 160 to 246 (PDPV…GTLK), 256 to 341 (PQVV…LELT), and 346 to 432 (PDQV…TSVL). The cysteines at positions 90 and 138 are disulfide-linked. Residues asparagine 96 and asparagine 105 are each glycosylated (N-linked (GlcNAc...) asparagine). Cysteine 276 and cysteine 324 are joined by a disulfide. Residues asparagine 280, asparagine 306, asparagine 317, asparagine 368, and asparagine 415 are each glycosylated (N-linked (GlcNAc...) asparagine). A disulfide bond links cysteine 375 and cysteine 416. The chain crosses the membrane as a helical span at residues 451-471 (IVIGILAVIAVASELGYFLCI). The Cytoplasmic portion of the chain corresponds to 472–585 (RNARRPSRKT…SIYEELVNPE (114 aa)). 2 disordered regions span residues 477 to 510 (PSRKTTEDPSHETSQPIPKEEHPTEPSSESLSPE) and 527 to 563 (QPPDLPEETYETKLPSASRRGNSFSPWKPPPKPLMPP). The span at 501-510 (EPSSESLSPE) shows a compositional bias: low complexity. A compositionally biased stretch (pro residues) spans 553 to 562 (WKPPPKPLMP). A phosphotyrosine mark is found at tyrosine 578 and tyrosine 589.

Belongs to the immunoglobulin superfamily. CEA family. As to quaternary structure, interacts (via extracellular domain) with PTPRH (via extracellular domain); the interaction dephosphorylates CEACAM20. Interacts (phosphorylated form) with SYK (via SH2 domains); the interaction further enhances CEACAM20 phosphorylation. Phosphorylated on tyrosine residues by SYK, SRC and FYN in vitro.

It localises to the cell projection. Its subcellular location is the microvillus membrane. The protein resides in the apical cell membrane. Functionally, together with the tyrosine-protein kinase SYK, enhances production of the cytokine CXCL8/IL-8 via the NFKB pathway and may thus have a role in the intestinal immune response. This Homo sapiens (Human) protein is Cell adhesion molecule CEACAM20.